We begin with the raw amino-acid sequence, 38 residues long: Potassium channel toxin alpha-KTx 2.10 (38 aa).

Intrachain disulfides connect cysteine 7-cysteine 29, cysteine 13-cysteine 34, and cysteine 17-cysteine 36.

In terms of tissue distribution, expressed by the venom gland.

It is found in the secreted. Its function is as follows. Blocks human voltage-gated potassium (Kv) channel Kv1.2/KCNA2. Does not inhibit human Kv1.1/KCNA1 at 100nM concentration. The polypeptide is Potassium channel toxin alpha-KTx 2.10 (Centruroides bonito (Scorpion)).